Here is a 550-residue protein sequence, read N- to C-terminus: Glutamyl-tRNA(Gln) amidotransferase subunit A, mitochondrial (550 aa).

Residues K79 and S171 each act as charge relay system in the active site. Catalysis depends on S195, which acts as the Acyl-ester intermediate. Residues 371–390 (EKDENKVDNDNDDDDDVDEN) form a disordered region.

This sequence belongs to the amidase family. GatA subfamily. In terms of assembly, subunit of the heterotrimeric GatCAB amidotransferase (AdT) complex, composed of A, B and C subunits.

The protein resides in the mitochondrion. The enzyme catalyses L-glutamyl-tRNA(Gln) + L-glutamine + ATP + H2O = L-glutaminyl-tRNA(Gln) + L-glutamate + ADP + phosphate + H(+). Its function is as follows. Allows the formation of correctly charged Gln-tRNA(Gln) through the transamidation of misacylated Glu-tRNA(Gln) in the mitochondria. The reaction takes place in the presence of glutamine and ATP through an activated gamma-phospho-Glu-tRNA(Gln). In Dictyostelium discoideum (Social amoeba), this protein is Glutamyl-tRNA(Gln) amidotransferase subunit A, mitochondrial.